Consider the following 611-residue polypeptide: 1,4-alpha-glucan branching enzyme GlgB (611 aa).

D302 (nucleophile) is an active-site residue. The Proton donor role is filled by E343.

The protein belongs to the glycosyl hydrolase 13 family. GlgB subfamily. Monomer.

The enzyme catalyses Transfers a segment of a (1-&gt;4)-alpha-D-glucan chain to a primary hydroxy group in a similar glucan chain.. It participates in glycan biosynthesis; glycogen biosynthesis. Catalyzes the formation of the alpha-1,6-glucosidic linkages in glycogen by scission of a 1,4-alpha-linked oligosaccharide from growing alpha-1,4-glucan chains and the subsequent attachment of the oligosaccharide to the alpha-1,6 position. This is 1,4-alpha-glucan branching enzyme GlgB from Fusobacterium nucleatum subsp. nucleatum (strain ATCC 25586 / DSM 15643 / BCRC 10681 / CIP 101130 / JCM 8532 / KCTC 2640 / LMG 13131 / VPI 4355).